A 236-amino-acid polypeptide reads, in one-letter code: Biosynthetic peptidoglycan transglycosylase (236 aa).

The chain crosses the membrane as a helical span at residues 12 to 31 (ALLWFVAGSIVLVLVFRWVP).

Belongs to the glycosyltransferase 51 family.

It is found in the cell inner membrane. It catalyses the reaction [GlcNAc-(1-&gt;4)-Mur2Ac(oyl-L-Ala-gamma-D-Glu-L-Lys-D-Ala-D-Ala)](n)-di-trans,octa-cis-undecaprenyl diphosphate + beta-D-GlcNAc-(1-&gt;4)-Mur2Ac(oyl-L-Ala-gamma-D-Glu-L-Lys-D-Ala-D-Ala)-di-trans,octa-cis-undecaprenyl diphosphate = [GlcNAc-(1-&gt;4)-Mur2Ac(oyl-L-Ala-gamma-D-Glu-L-Lys-D-Ala-D-Ala)](n+1)-di-trans,octa-cis-undecaprenyl diphosphate + di-trans,octa-cis-undecaprenyl diphosphate + H(+). Its pathway is cell wall biogenesis; peptidoglycan biosynthesis. In terms of biological role, peptidoglycan polymerase that catalyzes glycan chain elongation from lipid-linked precursors. The protein is Biosynthetic peptidoglycan transglycosylase of Pseudomonas putida (strain ATCC 47054 / DSM 6125 / CFBP 8728 / NCIMB 11950 / KT2440).